A 508-amino-acid polypeptide reads, in one-letter code: Maturase K (508 aa).

This sequence belongs to the intron maturase 2 family. MatK subfamily.

The protein localises to the plastid. The protein resides in the chloroplast. In terms of biological role, usually encoded in the trnK tRNA gene intron. Probably assists in splicing its own and other chloroplast group II introns. The polypeptide is Maturase K (Wolffia arrhiza (Rootless water-meal)).